The chain runs to 267 residues: Distal basal body ring component protein (267 aa).

The signal sequence occupies residues 1-29; the sequence is MKAFLFAAAATLVITALSAPAFAGTPVTL.

In terms of assembly, flaD is a subunit of the flagellar transenvelope basal body.

It is found in the periplasm. Its subcellular location is the bacterial flagellum basal body. Functionally, flaD might be the structural protein of the distal basal body ring P, or it is necessary for the assembly of the P ring. The protein is Distal basal body ring component protein (flaD) of Caulobacter vibrioides (strain ATCC 19089 / CIP 103742 / CB 15) (Caulobacter crescentus).